We begin with the raw amino-acid sequence, 353 residues long: UPF0283 membrane protein YcjF (353 aa).

A compositionally biased stretch (basic and acidic residues) spans 1–19 (MSEPLKPRIDFAEPLKEEP). Positions 1-35 (MSEPLKPRIDFAEPLKEEPTSAFKAQQTFSEAESR) are disordered. The Periplasmic segment spans residues 1–69 (MSEPLKPRID…LRPKRSLWRK (69 aa)). Residues 70–90 (MVMGGLALFGASVVGQGVQWT) traverse the membrane as a helical segment. At 91–99 (MNAWQTQDW) the chain is on the cytoplasmic side. The chain crosses the membrane as a helical span at residues 100 to 120 (VALGGCAAGALIVGAGVGSVV). The Periplasmic portion of the chain corresponds to 121–212 (TEWRRLWRLR…ARREISRFAA (92 aa)). The helical transmembrane segment at 213 to 233 (ESTLMIAVSPLALVDMAFIAW) threads the bilayer. At 234-353 (RNLRLINRIA…LQKSKSSPEK (120 aa)) the chain is on the cytoplasmic side.

Belongs to the UPF0283 family.

The protein localises to the cell inner membrane. The chain is UPF0283 membrane protein YcjF (ycjF) from Salmonella typhimurium (strain LT2 / SGSC1412 / ATCC 700720).